The chain runs to 258 residues: MLALISPAKTLDYESTLPTDKHTLPRLLDQSQALIDYCRSLSASEIASLMSVSEKIAKLNAERFQDWTSELTLANARQAIFAFKGDVYTGLDAYHLQENDFEFAQKHLRMLSGLYGLLRPLDLMMPYRLEMGTKLHNSRGHNLYEFWDDRITRLINEDLEQTNSKILVNIASDEYYKSVKEQKINAQIVKPVFLDQKNGKYKVISFYAKKARGLMARFIIENKLENAEDLKAFNSEGYYFDLENSNQHELVFKRDEQA.

This sequence belongs to the UPF0246 family.

The polypeptide is UPF0246 protein ACIAD2218 (Acinetobacter baylyi (strain ATCC 33305 / BD413 / ADP1)).